An 85-amino-acid polypeptide reads, in one-letter code: U4-theraphotoxin-Hhn1r (85 aa).

A signal peptide spans Met1 to Ala22. Residues Glu23–Arg48 constitute a propeptide that is removed on maturation. Intrachain disulfides connect Cys52–Cys66, Cys56–Cys77, and Cys71–Cys82.

The protein belongs to the neurotoxin 12 (Hwtx-2) family. 02 (Hwtx-2) subfamily. As to expression, expressed by the venom gland.

Its subcellular location is the secreted. Functionally, postsynaptic neurotoxin. The chain is U4-theraphotoxin-Hhn1r from Cyriopagopus hainanus (Chinese bird spider).